Consider the following 1005-residue polypeptide: DNA double-strand break repair Rad50 ATPase (1005 aa).

ATP-binding positions include lysine 14, 35–40, 62–64, and glutamine 134; these read GSGKSS and ITK. Coiled-coil stretches lie at residues 189–230, 292–321, 346–379, and 404–498; these read KENY…IEKL, LVDE…KQLE, LDTL…EIEK, and AVEY…LKEV. A Zinc-hook domain is found at 457 to 554; it reads IEEKKKVLEN…DIEKLKKEID (98 aa). Zn(2+) is bound by residues cysteine 502 and cysteine 505. 3 coiled-coil regions span residues 523-600, 656-692, and 800-834; these read TQLN…YVIN, KEKC…ELIE, and RQEL…LKEM.

This sequence belongs to the SMC family. RAD50 subfamily. Homodimer. Forms a heterotetramer composed of two Mre11 subunits and two Rad50 subunits. Zn(2+) is required as a cofactor.

Functionally, part of the Rad50/Mre11 complex, which is involved in the early steps of DNA double-strand break (DSB) repair. The complex may facilitate opening of the processed DNA ends to aid in the recruitment of HerA and NurA. Rad50 controls the balance between DNA end bridging and DNA resection via ATP-dependent structural rearrangements of the Rad50/Mre11 complex. The protein is DNA double-strand break repair Rad50 ATPase of Methanocaldococcus jannaschii (strain ATCC 43067 / DSM 2661 / JAL-1 / JCM 10045 / NBRC 100440) (Methanococcus jannaschii).